We begin with the raw amino-acid sequence, 358 residues long: Phosphoribosylformylglycinamidine cyclo-ligase (358 aa).

The protein belongs to the AIR synthase family.

The protein resides in the cytoplasm. It catalyses the reaction 2-formamido-N(1)-(5-O-phospho-beta-D-ribosyl)acetamidine + ATP = 5-amino-1-(5-phospho-beta-D-ribosyl)imidazole + ADP + phosphate + H(+). It functions in the pathway purine metabolism; IMP biosynthesis via de novo pathway; 5-amino-1-(5-phospho-D-ribosyl)imidazole from N(2)-formyl-N(1)-(5-phospho-D-ribosyl)glycinamide: step 2/2. In Chromohalobacter salexigens (strain ATCC BAA-138 / DSM 3043 / CIP 106854 / NCIMB 13768 / 1H11), this protein is Phosphoribosylformylglycinamidine cyclo-ligase.